Consider the following 572-residue polypeptide: [Pyruvate dehydrogenase [acetyl-transferring]]-phosphatase 1, mitochondrial (572 aa).

Positions 95 to 122 are disordered; sequence NTSGNINMPSPNPKGTETQKSQRSQNDQ. Positions 153-543 constitute a PPM-type phosphatase domain; the sequence is RYDVAQLPSN…DDLTVTVAFF (391 aa). Positions 197, 198, 424, and 480 each coordinate Mn(2+). The span at 470 to 480 shows a compositional bias: basic and acidic residues; the sequence is EAQRPAFRYKD. The tract at residues 470–492 is disordered; it reads EAQRPAFRYKDNNSSSPSGSNPE. The segment covering 481-491 has biased composition (low complexity); that stretch reads NNSSSPSGSNP.

The protein belongs to the PP2C family. Mg(2+) serves as cofactor. It depends on Mn(2+) as a cofactor. In terms of processing, processed by mitochondrial inner membrane protease (IMP) complex and released to the intermembrane space.

It localises to the mitochondrion intermembrane space. The catalysed reaction is O-phospho-L-seryl-[pyruvate dehydrogenase E1 alpha subunit] + H2O = L-seryl-[pyruvate dehydrogenase E1 alpha subunit] + phosphate. Functionally, catalyzes the dephosphorylation and concomitant reactivation of the E1 alpha subunit (PDA1) of the pyruvate dehydrogenase complex. The protein is [Pyruvate dehydrogenase [acetyl-transferring]]-phosphatase 1, mitochondrial (PTC5) of Saccharomyces cerevisiae (strain ATCC 204508 / S288c) (Baker's yeast).